The primary structure comprises 676 residues: MTSTKDKIEKLRKILLKYEYFYHTLNQSIISDAEYDYLFRQLYELELKNKELIPSDSPTQKVGSHILQKFKKIKHFSPMLSLENTFDVNGYLNFKKRIKKSIHNNEPLSFCCELKLDGVAISIIYEEGIFVRAATRGDGFEGENITSNARMIDSIPLKLKGIDIPKRLEIRGEVFMLKSNFIKLNKKYKLNQNKYFSNPRNAAAGSLRHIDPNITAERKLIFSCHGCDFFVKTNKELTTHYQRLMKCLSWGIPVNKEIVICSSDIEIIQFYKKIAQKRNFLDFDIDGIVIKVNSLELQKKIGSTTKSPRWAIAFKFSPKERITTLNDVKFQVGRTGVITPVAYFNPVYISGVMISKASLHNKNEIERLNLHFNDTITICRSGDVIPRLLNVIEIRRCDNAKKIIFPSFCPVCNTELLENIEEKLIRCHSGLTCDAQKKQALYHFFSKKSLYVVGLGPKIINELVEKGLVKNPIDFFYLKDIDLIQLKNVGKRKSIKIINSIKKCKKTTLKCFIYALGIPGVGEVVAGKIANYFIKLDKLMNSNILELNCISGVGKIISNNIFNYFSTISNREMVVKLIKQAGIFLNDQEIHKINSEKTYFFNKKIVLTGVFKSFSRIELKTILLSLGAKISNNISRKTDFLIYGNNFGSKFFRAKDLDVKIINQEELNSLIRIKEQ.

Residues 32 to 36, 81 to 82, and Glu113 each bind NAD(+); these read DAEYD and SL. The N6-AMP-lysine intermediate role is filled by Lys115. Positions 136, 173, 291, and 315 each coordinate NAD(+). 4 residues coordinate Zn(2+): Cys409, Cys412, Cys427, and Cys433. In terms of domain architecture, BRCT spans 595–676; the sequence is SEKTYFFNKK…LNSLIRIKEQ (82 aa).

Belongs to the NAD-dependent DNA ligase family. LigA subfamily. Mg(2+) is required as a cofactor. Mn(2+) serves as cofactor.

It carries out the reaction NAD(+) + (deoxyribonucleotide)n-3'-hydroxyl + 5'-phospho-(deoxyribonucleotide)m = (deoxyribonucleotide)n+m + AMP + beta-nicotinamide D-nucleotide.. Its function is as follows. DNA ligase that catalyzes the formation of phosphodiester linkages between 5'-phosphoryl and 3'-hydroxyl groups in double-stranded DNA using NAD as a coenzyme and as the energy source for the reaction. It is essential for DNA replication and repair of damaged DNA. The protein is DNA ligase of Buchnera aphidicola subsp. Acyrthosiphon pisum (strain Tuc7).